The primary structure comprises 336 residues: DNA-directed RNA polymerase subunit alpha (336 aa).

An alpha N-terminal domain (alpha-NTD) region spans residues 1 to 232 (MIQKNWQELI…DQLGVFVNFD (232 aa)). Positions 248 to 336 (FNPALLKKVD…DLAKRYEDQY (89 aa)) are alpha C-terminal domain (alpha-CTD).

It belongs to the RNA polymerase alpha chain family. In terms of assembly, homodimer. The RNAP catalytic core consists of 2 alpha, 1 beta, 1 beta' and 1 omega subunit. When a sigma factor is associated with the core the holoenzyme is formed, which can initiate transcription.

It catalyses the reaction RNA(n) + a ribonucleoside 5'-triphosphate = RNA(n+1) + diphosphate. Its function is as follows. DNA-dependent RNA polymerase catalyzes the transcription of DNA into RNA using the four ribonucleoside triphosphates as substrates. The chain is DNA-directed RNA polymerase subunit alpha from Rhizobium etli (strain CIAT 652).